Here is a 202-residue protein sequence, read N- to C-terminus: Protein GrpE (202 aa).

The segment covering 21 to 37 has biased composition (basic and acidic residues); the sequence is EELKNEEVKEETHEHEH. A disordered region spans residues 21 to 52; it reads EELKNEEVKEETHEHEHKHGGHTCCGKHGHKH. Over residues 38-51 the composition is skewed to basic residues; that stretch reads KHGGHTCCGKHGHK.

Belongs to the GrpE family. In terms of assembly, homodimer.

The protein resides in the cytoplasm. Its function is as follows. Participates actively in the response to hyperosmotic and heat shock by preventing the aggregation of stress-denatured proteins, in association with DnaK and GrpE. It is the nucleotide exchange factor for DnaK and may function as a thermosensor. Unfolded proteins bind initially to DnaJ; upon interaction with the DnaJ-bound protein, DnaK hydrolyzes its bound ATP, resulting in the formation of a stable complex. GrpE releases ADP from DnaK; ATP binding to DnaK triggers the release of the substrate protein, thus completing the reaction cycle. Several rounds of ATP-dependent interactions between DnaJ, DnaK and GrpE are required for fully efficient folding. The chain is Protein GrpE from Fusobacterium nucleatum subsp. polymorphum (Fusobacterium polymorphum).